The primary structure comprises 284 residues: Tropomyosin beta chain (284 aa).

An N-acetylmethionine modification is found at Met-1. Residues 1–284 (MEAIKKKMQM…DNALNDITSL (284 aa)) adopt a coiled-coil conformation. Basic and acidic residues-rich tracts occupy residues 22-40 (AEQAEADKKQAEDRCKQLE) and 51-66 (KGTEDEVEKYSESVKE). The interval 22–66 (AEQAEADKKQAEDRCKQLEEEQQGLQKKLKGTEDEVEKYSESVKE) is disordered.

Belongs to the tropomyosin family. Homodimer. Heterodimer of an alpha (TPM1, TPM3 or TPM4) and a beta (TPM2) chain.

It localises to the cytoplasm. Its subcellular location is the cytoskeleton. Its function is as follows. Binds to actin filaments in muscle and non-muscle cells. Plays a central role, in association with the troponin complex, in the calcium dependent regulation of vertebrate striated muscle contraction. Smooth muscle contraction is regulated by interaction with caldesmon. In non-muscle cells is implicated in stabilizing cytoskeleton actin filaments. This chain is Tropomyosin beta chain (TPM2), found in Gallus gallus (Chicken).